The primary structure comprises 55 residues: MAKGAESIYRYYEIKGEKVVRKKKFCPRCGEGVFLAEHKDRLSCGKCGYTEFKKK.

Residues C26, C29, C44, and C47 each coordinate Zn(2+).

This sequence belongs to the eukaryotic ribosomal protein eS31 family. In terms of assembly, part of the 30S ribosomal subunit. The cofactor is Zn(2+).

In Archaeoglobus fulgidus (strain ATCC 49558 / DSM 4304 / JCM 9628 / NBRC 100126 / VC-16), this protein is Small ribosomal subunit protein eS31.